A 664-amino-acid polypeptide reads, in one-letter code: Translation factor GUF1, mitochondrial (664 aa).

One can recognise a tr-type G domain in the interval 63-246; the sequence is SNYRNFSIVA…SIINNIPPPQ (184 aa). GTP-binding positions include 72–79, 139–143, and 193–196; these read AHVDHGKS, DTPGH, and NKID.

It belongs to the TRAFAC class translation factor GTPase superfamily. Classic translation factor GTPase family. LepA subfamily.

The protein resides in the mitochondrion inner membrane. It carries out the reaction GTP + H2O = GDP + phosphate + H(+). Promotes mitochondrial protein synthesis. May act as a fidelity factor of the translation reaction, by catalyzing a one-codon backward translocation of tRNAs on improperly translocated ribosomes. Binds to mitochondrial ribosomes in a GTP-dependent manner. This is Translation factor GUF1, mitochondrial from Clavispora lusitaniae (strain ATCC 42720) (Yeast).